The chain runs to 247 residues: Myelin-oligodendrocyte glycoprotein (247 aa).

The first 29 residues, 1-29 (MASLSRPSLPSCLCSFLLLLLLQVSSSYA), serve as a signal peptide directing secretion. Topologically, residues 30–154 (GQFRVIGPRH…EDPFYWVSPG (125 aa)) are extracellular. The 114-residue stretch at 32–145 (FRVIGPRHPI…EEAAMELKVE (114 aa)) folds into the Ig-like V-type domain. Cysteine 53 and cysteine 127 are oxidised to a cystine. Asparagine 60 carries an N-linked (GlcNAc...) asparagine glycan. A helical transmembrane segment spans residues 155–175 (VLVLLAVLPVLLLQITVGLIF). The Cytoplasmic segment spans residues 176–210 (LCLQYRLRGKLRAEIENLHRTFDPHFLRVPCWKIT). The chain crosses the membrane as a helical span at residues 211-231 (LFVIVPVLGPLVALIICYNWL). Residues 232–247 (HRRLAGQFLEELRNPF) are Extracellular-facing.

Belongs to the immunoglobulin superfamily. BTN/MOG family. Homodimer. May form heterodimers between the different isoforms. As to quaternary structure, (Microbial infection) Interacts with rubella virus E2 glycoprotein. As to expression, found exclusively in the CNS, where it is localized on the surface of myelin and oligodendrocyte cytoplasmic membranes.

It localises to the cell membrane. Mediates homophilic cell-cell adhesion. Minor component of the myelin sheath. May be involved in completion and/or maintenance of the myelin sheath and in cell-cell communication. In terms of biological role, (Microbial infection) Acts as a receptor for rubella virus. The polypeptide is Myelin-oligodendrocyte glycoprotein (MOG) (Homo sapiens (Human)).